The following is a 691-amino-acid chain: Elongation factor G (691 aa).

The tr-type G domain occupies 8 to 282; that stretch reads ERVRNIGIAA…AVVDYLPAPV (275 aa). Residues 17–24, 81–85, and 135–138 contribute to the GTP site; these read AHIDAGKT, DTPGH, and NKMD.

It belongs to the TRAFAC class translation factor GTPase superfamily. Classic translation factor GTPase family. EF-G/EF-2 subfamily.

Its subcellular location is the cytoplasm. In terms of biological role, catalyzes the GTP-dependent ribosomal translocation step during translation elongation. During this step, the ribosome changes from the pre-translocational (PRE) to the post-translocational (POST) state as the newly formed A-site-bound peptidyl-tRNA and P-site-bound deacylated tRNA move to the P and E sites, respectively. Catalyzes the coordinated movement of the two tRNA molecules, the mRNA and conformational changes in the ribosome. The chain is Elongation factor G from Prochlorococcus marinus (strain MIT 9313).